The chain runs to 230 residues: Protein CWC15 homolog B (230 aa).

Residues 1-126 (MTTAARPTFE…DEDSDDDTAA (126 aa)) form a disordered region. The span at 22-34 (DLSQLSKQYSSRD) shows a compositional bias: polar residues. Residues 52–84 (EEVRSRDFRRELEERERVAVRDKNRDRPTREHT) show a composition bias toward basic and acidic residues. A compositionally biased stretch (acidic residues) spans 102-124 (DADDPLTDEDADEDSDEDSDDDT). Residues 121 to 165 (DDDTAALLAELEKIKKERAEEQVRKELEQKAEEERIRMENILSGN) adopt a coiled-coil conformation.

Belongs to the CWC15 family. As to quaternary structure, identified in the spliceosome C complex. Component of the minor spliceosome, which splices U12-type introns.

It is found in the nucleus. Its function is as follows. Involved in pre-mRNA splicing as component of the spliceosome. This is Protein CWC15 homolog B (cwc15-b) from Xenopus laevis (African clawed frog).